We begin with the raw amino-acid sequence, 341 residues long: GTPase Obg (341 aa).

The 159-residue stretch at 1–159 folds into the Obg domain; sequence MKFLDQAKVY…RAIWLRLKLI (159 aa). The region spanning 160–327 is the OBG-type G domain; that stretch reads ADAGLVGLPN…VLRAGAHIIE (168 aa). GTP-binding positions include 166–173, 191–195, 212–215, 279–282, and 308–310; these read GLPNAGKS, FTTLH, DIPG, SQID, and SAV. Residues Ser-173 and Thr-193 each coordinate Mg(2+).

It belongs to the TRAFAC class OBG-HflX-like GTPase superfamily. OBG GTPase family. Monomer. The cofactor is Mg(2+).

It localises to the cytoplasm. Its function is as follows. An essential GTPase which binds GTP, GDP and possibly (p)ppGpp with moderate affinity, with high nucleotide exchange rates and a fairly low GTP hydrolysis rate. Plays a role in control of the cell cycle, stress response, ribosome biogenesis and in those bacteria that undergo differentiation, in morphogenesis control. This Bartonella tribocorum (strain CIP 105476 / IBS 506) protein is GTPase Obg.